We begin with the raw amino-acid sequence, 132 residues long: Small ribosomal subunit protein uS8 (132 aa).

The protein belongs to the universal ribosomal protein uS8 family. Part of the 30S ribosomal subunit. Contacts proteins S5 and S12.

In terms of biological role, one of the primary rRNA binding proteins, it binds directly to 16S rRNA central domain where it helps coordinate assembly of the platform of the 30S subunit. This Rhodospirillum rubrum (strain ATCC 11170 / ATH 1.1.1 / DSM 467 / LMG 4362 / NCIMB 8255 / S1) protein is Small ribosomal subunit protein uS8.